A 287-amino-acid chain; its full sequence is ATP synthase gamma chain (287 aa).

The protein belongs to the ATPase gamma chain family. In terms of assembly, F-type ATPases have 2 components, CF(1) - the catalytic core - and CF(0) - the membrane proton channel. CF(1) has five subunits: alpha(3), beta(3), gamma(1), delta(1), epsilon(1). CF(0) has three main subunits: a, b and c.

It localises to the cell inner membrane. Functionally, produces ATP from ADP in the presence of a proton gradient across the membrane. The gamma chain is believed to be important in regulating ATPase activity and the flow of protons through the CF(0) complex. This chain is ATP synthase gamma chain, found in Cronobacter sakazakii (strain ATCC BAA-894) (Enterobacter sakazakii).